The following is a 588-amino-acid chain: uncharacterized protein (588 aa).

The first 19 residues, 1–19 (MRSTAYLTALLSFLGATHA), serve as a signal peptide directing secretion. N-linked (GlcNAc...) asparagine glycans are attached at residues Asn-45 and Asn-104. Residues 118–303 (GQGRIPLYSA…TSVTLRTFKD (186 aa)) form the FAD-binding PCMH-type domain. The residue at position 156 (His-156) is a Pros-8alpha-FAD histidine. Residues Asn-179, Asn-312, Asn-320, Asn-351, Asn-370, and Asn-446 are each glycosylated (N-linked (GlcNAc...) asparagine).

It belongs to the oxygen-dependent FAD-linked oxidoreductase family. FAD serves as cofactor.

It localises to the secreted. This is an uncharacterized protein from Arthroderma benhamiae (strain ATCC MYA-4681 / CBS 112371) (Trichophyton mentagrophytes).